A 67-amino-acid chain; its full sequence is Probable Sec-independent protein translocase protein TatE (67 aa).

Residues 4–21 traverse the membrane as a helical segment; the sequence is ISITKLLVVAALVVLLFG.

The protein belongs to the TatA/E family. TatE subfamily.

Its subcellular location is the cell inner membrane. Functionally, part of the twin-arginine translocation (Tat) system that transports large folded proteins containing a characteristic twin-arginine motif in their signal peptide across membranes. TatE shares overlapping functions with TatA. The chain is Probable Sec-independent protein translocase protein TatE from Salmonella arizonae (strain ATCC BAA-731 / CDC346-86 / RSK2980).